A 126-amino-acid polypeptide reads, in one-letter code: Protein ApaG (126 aa).

Positions 2–126 (SALDDSIRVE…FRLALPGLLH (125 aa)) constitute an ApaG domain.

This is Protein ApaG from Shewanella sp. (strain MR-7).